Consider the following 352-residue polypeptide: C-C chemokine receptor type 5 (352 aa).

Residues 1 to 30 lie on the Extracellular side of the membrane; it reads MDYQVSSPTYDIDYYTSEPCQKINVKQIAA. At Y3 the chain carries Sulfotyrosine. S6 and S7 each carry an O-linked (GalNAc...) serine glycan. Residues Y10, Y14, and Y15 each carry the sulfotyrosine modification. 2 disulfide bridges follow: C20–C269 and C101–C178. Residues 31–58 form a helical membrane-spanning segment; it reads RLLPPLYSLVFIFGFVGNMLVILILINC. The Cytoplasmic portion of the chain corresponds to 59–68; that stretch reads KRLKSMTDIY. Residues 69–89 form a helical membrane-spanning segment; sequence LLNLAISDLFFLLTVPFWAHY. At 90–102 the chain is on the extracellular side; it reads AAAQWDFGNTMCQ. A helical membrane pass occupies residues 103–124; sequence LLTGLYFIGFFSGIFFIILLTI. Residues 125–141 lie on the Cytoplasmic side of the membrane; it reads DRYLAIVHAVFALKART. A helical membrane pass occupies residues 142–166; sequence VTFGVVTSVITWVVAVFASLPGIIF. Residues 167–198 lie on the Extracellular side of the membrane; that stretch reads TRSQKEGLHYTCSSHFPYSQYQFWKNFQTLKI. A helical transmembrane segment spans residues 199–218; the sequence is VILGLVLPLLVMVICYSGIL. Residues 219-235 are Cytoplasmic-facing; sequence KTLLRCRNEKKRHRAVR. A helical transmembrane segment spans residues 236–260; that stretch reads LIFTIMIVYFLFWAPYNIVLLLNTF. The Extracellular portion of the chain corresponds to 261-277; that stretch reads QEFFGLNNCSSSNRLDQ. The chain crosses the membrane as a helical span at residues 278-301; that stretch reads AMQVTETLGMTHCCINPIIYAFVG. Residues 302–352 lie on the Cytoplasmic side of the membrane; that stretch reads EKFRNYLLVFFQKHIAKRFCKCCSIFQQEAPERASSVYTRSTGEQEISVGL. Residues C321, C323, and C324 are each lipidated (S-palmitoyl cysteine). S336, S337, S342, and S349 each carry phosphoserine; by BARK1.

Belongs to the G-protein coupled receptor 1 family. Interacts with PRAF2. Efficient ligand binding to CCL3/MIP-1alpha and CCL4/MIP-1beta requires sulfation, O-glycosylation and sialic acid modifications. Glycosylation on Ser-6 is required for efficient binding of CCL4. Interacts with GRK2. Interacts with ARRB1 and ARRB2. Interacts with CNIH4. Interacts with S100A4; this interaction stimulates T-lymphocyte chemotaxis. Post-translationally, sulfated on at least 2 of the N-terminal tyrosines. Sulfation is required for efficient binding of the chemokines, CCL3 and CCL4. In terms of processing, palmitoylation in the C-terminal is important for cell surface expression. Phosphorylation on serine residues in the C-terminal is stimulated by binding CC chemokines especially by APO-RANTES. Post-translationally, O-glycosylated, but not N-glycosylated. Ser-6 appears to be the major site even if Ser-7 may be also O-glycosylated. Also sialylated glycans present which contribute to chemokine binding. Thr-16 and Ser-17 may also be glycosylated and, if so, with small moieties such as a T-antigen.

Its subcellular location is the cell membrane. Functionally, receptor for a number of inflammatory CC-chemokines including CCL3/MIP-1-alpha, CCL4/MIP-1-beta and RANTES and subsequently transduces a signal by increasing the intracellular calcium ion level. May play a role in the control of granulocytic lineage proliferation or differentiation. Participates in T-lymphocyte migration to the infection site by acting as a chemotactic receptor. The sequence is that of C-C chemokine receptor type 5 (CCR5) from Pongo abelii (Sumatran orangutan).